The sequence spans 267 residues: Glutamate racemase (267 aa).

Substrate contacts are provided by residues 10-11 (DS) and 42-43 (YG). Cysteine 73 acts as the Proton donor/acceptor in catalysis. 74-75 (NT) provides a ligand contact to substrate. Cysteine 183 (proton donor/acceptor) is an active-site residue. Substrate is bound at residue 184–185 (TH).

Belongs to the aspartate/glutamate racemases family.

The enzyme catalyses L-glutamate = D-glutamate. It participates in cell wall biogenesis; peptidoglycan biosynthesis. Provides the (R)-glutamate required for cell wall biosynthesis. This is Glutamate racemase from Lactobacillus acidophilus (strain ATCC 700396 / NCK56 / N2 / NCFM).